We begin with the raw amino-acid sequence, 916 residues long: DNA ligase 1 (916 aa).

Residues 1-10 show a composition bias toward polar residues; sequence MQRSIMSFFQ. Positions 1–197 are disordered; it reads MQRSIMSFFQ…SPESVTLTKT (197 aa). The span at 13–43 shows a compositional bias: basic and acidic residues; sequence KEGKAKKPEKETPSSIREKEPPPKVALKERN. Ser-49, Ser-51, and Ser-65 each carry phosphoserine. A Phosphothreonine modification is found at Thr-77. Over residues 99 to 111 the composition is skewed to polar residues; the sequence is PENSPVFNCSSPM. A compositionally biased stretch (basic residues) spans 119–129; sequence PKRRTARKQLP. The residue at position 144 (Lys-144) is an N6-acetyllysine. A compositionally biased stretch (basic and acidic residues) spans 153 to 177; that stretch reads KEEETPKESLAEAEDIKQKEEKEGD. A compositionally biased stretch (polar residues) spans 185–197; sequence PTKSPESVTLTKT. At Thr-193 the chain carries Phosphothreonine. At Lys-225 the chain carries N6-acetyllysine. Residues Ser-228 and Ser-229 each carry the phosphoserine modification. Phosphothreonine is present on Thr-232. Residues 236 to 266 are disordered; it reads PAVKTEVKQEESGTLRKEETKGTLDPANYNP. Residues 238–257 are compositionally biased toward basic and acidic residues; the sequence is VKTEVKQEESGTLRKEETKG. The tract at residues 447-456 is interaction with target DNA; it reads RLRLGLAEQS. An ATP-binding site is contributed by Glu-564. The N6-AMP-lysine intermediate role is filled by Lys-566. Residues Arg-571 and Glu-619 each coordinate ATP. Residue Glu-619 coordinates Mg(2+). An interaction with target DNA region spans residues 640-642; it reads KRK. Residue Glu-718 participates in Mg(2+) binding. Positions 723 and 742 each coordinate ATP. Thr-796 is subject to Phosphothreonine. Phosphoserine is present on residues Ser-799, Ser-906, Ser-907, and Ser-911. The disordered stretch occupies residues 879–916; that stretch reads DKQPEQATTSNQVASLYRKQSQIQNQQSSDLDSDVEDY. Positions 883–908 are enriched in polar residues; it reads EQATTSNQVASLYRKQSQIQNQQSSD.

This sequence belongs to the ATP-dependent DNA ligase family. As to quaternary structure, interacts with PCNA. Interacts with POLB. Requires Mg(2+) as cofactor.

It is found in the nucleus. It carries out the reaction ATP + (deoxyribonucleotide)n-3'-hydroxyl + 5'-phospho-(deoxyribonucleotide)m = (deoxyribonucleotide)n+m + AMP + diphosphate.. Functionally, DNA ligase that seals nicks in double-stranded during DNA repair. Also involved in DNA replication and DNA recombination. The polypeptide is DNA ligase 1 (Lig1) (Mus musculus (Mouse)).